Consider the following 481-residue polypeptide: Glutamyl-tRNA(Gln) amidotransferase subunit A (481 aa).

Residues K74 and S149 each act as charge relay system in the active site. S173 acts as the Acyl-ester intermediate in catalysis.

The protein belongs to the amidase family. GatA subfamily. As to quaternary structure, heterotrimer of A, B and C subunits.

The enzyme catalyses L-glutamyl-tRNA(Gln) + L-glutamine + ATP + H2O = L-glutaminyl-tRNA(Gln) + L-glutamate + ADP + phosphate + H(+). In terms of biological role, allows the formation of correctly charged Gln-tRNA(Gln) through the transamidation of misacylated Glu-tRNA(Gln) in organisms which lack glutaminyl-tRNA synthetase. The reaction takes place in the presence of glutamine and ATP through an activated gamma-phospho-Glu-tRNA(Gln). This Francisella tularensis subsp. holarctica (strain FTNF002-00 / FTA) protein is Glutamyl-tRNA(Gln) amidotransferase subunit A.